The sequence spans 947 residues: Valine--tRNA ligase (947 aa).

The short motif at 45–55 (PNVTGSLHMGH) is the 'HIGH' region element. A 'KMSKS' region motif is present at residues 591–595 (KMSKS). Residue Lys594 coordinates ATP. A coiled-coil region spans residues 879-943 (DLAAEQARLE…ASLRTALTRV (65 aa)).

This sequence belongs to the class-I aminoacyl-tRNA synthetase family. ValS type 1 subfamily. In terms of assembly, monomer.

The protein localises to the cytoplasm. The catalysed reaction is tRNA(Val) + L-valine + ATP = L-valyl-tRNA(Val) + AMP + diphosphate. Functionally, catalyzes the attachment of valine to tRNA(Val). As ValRS can inadvertently accommodate and process structurally similar amino acids such as threonine, to avoid such errors, it has a 'posttransfer' editing activity that hydrolyzes mischarged Thr-tRNA(Val) in a tRNA-dependent manner. The chain is Valine--tRNA ligase from Agrobacterium fabrum (strain C58 / ATCC 33970) (Agrobacterium tumefaciens (strain C58)).